Here is a 239-residue protein sequence, read N- to C-terminus: O-methyltransferase ankF (239 aa).

Residues E71, 73-74 (GT), S79, E98, and A127 contribute to the S-adenosyl-L-methionine site.

It belongs to the class I-like SAM-binding methyltransferase superfamily. Cation-dependent O-methyltransferase family.

The enzyme catalyses NK13650 B + S-adenosyl-L-methionine = NK13650 D + S-adenosyl-L-homocysteine + H(+). It functions in the pathway secondary metabolite biosynthesis. Its function is as follows. O-methyltransferase; part of the ank cluster that mediates the biosynthesis of NK13650 C, a highly modified cyclo-arginine-tyrosine dipeptide. AnkF converts NK13650 B to produce NK13650 D via methylation of the C-17 phenol group. Within the pathway, the cyclodipeptide synthase ankA acts as the scaffold-generating enzyme and is responsible for formation of the cyclo-Arg-Tyr diketopiperazine (cRY) from L-Arg and L-Tyr. The ankA product cRY is desaturated by the cytochrome P450 monooxygenase ankB to yield a dehydro-cyclodipeptide intermediate. The FAD-dependent monooxygenase ankC then installs the m-OH, ankD catalyzes the attachment of L-homoserine, and ankE ligates citrate to the ankD product to yield NK13650 B. The O-methyltransferase ankF is responsible for methylation of the C-17 phenol group of NK13650 B to produce NK13650 D. Amidation of NK13650 D with L-Asp by ankG then leads to the production of NK13650 C, whereas amidation of NK13650 B produces NK13650 A. This Aspergillus thermomutatus (Neosartorya pseudofischeri) protein is O-methyltransferase ankF.